Here is a 339-residue protein sequence, read N- to C-terminus: Heat-inducible transcription repressor HrcA (339 aa).

This sequence belongs to the HrcA family.

Its function is as follows. Negative regulator of class I heat shock genes (grpE-dnaK-dnaJ and groELS operons). Prevents heat-shock induction of these operons. This chain is Heat-inducible transcription repressor HrcA, found in Thermotoga neapolitana (strain ATCC 49049 / DSM 4359 / NBRC 107923 / NS-E).